The sequence spans 260 residues: MAKDDSTVRCFQGLLIFGHVIVGMCGIALTAECIFFVSDQHSLYPLLEATNNDDIFGAAWIGMFVGICLFCLSVLAIVGIMKSNRKILLAYFIMMFIVYGFEVASCITAATQRDFFTTNLFLKQMLMRYQNNSPPTNDDEWKNNGVTKTWDRLMLQDHCCGVNGPSDWQKYTSAFRVENNDADYPWPRQCCVMDKLKEPLNLDACKLGVPGYYHSQGCYELISGPMDRHAWGVAWFGFAILCWTFWVLLGTMFYWSRIEY.

Residues 1–15 are Cytoplasmic-facing; that stretch reads MAKDDSTVRCFQGLL. A helical transmembrane segment spans residues 16–36; sequence IFGHVIVGMCGIALTAECIFF. At 37–59 the chain is on the extracellular side; it reads VSDQHSLYPLLEATNNDDIFGAA. A helical transmembrane segment spans residues 60–80; it reads WIGMFVGICLFCLSVLAIVGI. The Cytoplasmic segment spans residues 81-86; the sequence is MKSNRK. The helical transmembrane segment at 87–107 threads the bilayer; the sequence is ILLAYFIMMFIVYGFEVASCI. Topologically, residues 108 to 229 are extracellular; it reads TAATQRDFFT…ELISGPMDRH (122 aa). A helical transmembrane segment spans residues 230–250; that stretch reads AWGVAWFGFAILCWTFWVLLG. Residues 251–260 lie on the Cytoplasmic side of the membrane; it reads TMFYWSRIEY.

Belongs to the tetraspanin (TM4SF) family. In terms of assembly, heterodimer with uroplakin-3A (UPK3A) or uroplakin-3B (UPK3B). N-glycosylated with high-mannose oligosaccharides. As to expression, bladder epithelium.

The protein resides in the membrane. Its function is as follows. Component of the asymmetric unit membrane (AUM); a highly specialized biomembrane elaborated by terminally differentiated urothelial cells. May play an important role in normal bladder epithelial physiology, possibly in regulating membrane permeability of superficial umbrella cells or in stabilizing the apical membrane through AUM/cytoskeletal interactions. The chain is Uroplakin-1b (Upk1b) from Mus musculus (Mouse).